The following is a 422-amino-acid chain: Glutamate-1-semialdehyde 2,1-aminomutase (422 aa).

Position 264 is an N6-(pyridoxal phosphate)lysine (Lys-264).

This sequence belongs to the class-III pyridoxal-phosphate-dependent aminotransferase family. HemL subfamily. Homodimer. It depends on pyridoxal 5'-phosphate as a cofactor.

It is found in the cytoplasm. It carries out the reaction (S)-4-amino-5-oxopentanoate = 5-aminolevulinate. It participates in porphyrin-containing compound metabolism; protoporphyrin-IX biosynthesis; 5-aminolevulinate from L-glutamyl-tRNA(Glu): step 2/2. The polypeptide is Glutamate-1-semialdehyde 2,1-aminomutase (Clostridium kluyveri (strain ATCC 8527 / DSM 555 / NBRC 12016 / NCIMB 10680 / K1)).